The chain runs to 159 residues: Ribosomal RNA large subunit methyltransferase H (159 aa).

S-adenosyl-L-methionine-binding positions include leucine 76, glycine 108, and 127-132 (FGRLTY).

This sequence belongs to the RNA methyltransferase RlmH family. As to quaternary structure, homodimer.

The protein resides in the cytoplasm. The enzyme catalyses pseudouridine(1915) in 23S rRNA + S-adenosyl-L-methionine = N(3)-methylpseudouridine(1915) in 23S rRNA + S-adenosyl-L-homocysteine + H(+). In terms of biological role, specifically methylates the pseudouridine at position 1915 (m3Psi1915) in 23S rRNA. The sequence is that of Ribosomal RNA large subunit methyltransferase H from Enterococcus faecalis (strain ATCC 700802 / V583).